The following is a 490-amino-acid chain: Betaine aldehyde dehydrogenase (490 aa).

Residues Thr26, Ile27, and Asp93 each contribute to the K(+) site. Position 150–152 (150–152) interacts with NAD(+); it reads GAW. Catalysis depends on Lys162, which acts as the Charge relay system. 176–179 lines the NAD(+) pocket; the sequence is KPSE. Val180 contributes to the K(+) binding site. 230 to 233 provides a ligand contact to NAD(+); it reads GVAS. Leu246 contributes to the K(+) binding site. Glu252 serves as the catalytic Proton acceptor. The NAD(+) site is built by Gly254, Cys286, and Glu387. Cys286 serves as the catalytic Nucleophile. Cysteine sulfenic acid (-SOH) is present on Cys286. Positions 457 and 460 each coordinate K(+). Glu464 (charge relay system) is an active-site residue.

This sequence belongs to the aldehyde dehydrogenase family. In terms of assembly, dimer of dimers. K(+) serves as cofactor.

It catalyses the reaction betaine aldehyde + NAD(+) + H2O = glycine betaine + NADH + 2 H(+). The protein operates within amine and polyamine biosynthesis; betaine biosynthesis via choline pathway; betaine from betaine aldehyde: step 1/1. Functionally, involved in the biosynthesis of the osmoprotectant glycine betaine. Catalyzes the irreversible oxidation of betaine aldehyde to the corresponding acid. This is Betaine aldehyde dehydrogenase from Escherichia coli O45:K1 (strain S88 / ExPEC).